Here is a 241-residue protein sequence, read N- to C-terminus: Spheroidene monooxygenase (241 aa).

This sequence belongs to the CrtA family. The cofactor is heme.

It carries out the reaction spheroidene + 4 reduced [2Fe-2S]-[ferredoxin] + 2 O2 + 4 H(+) = spheroiden-2-one + 4 oxidized [2Fe-2S]-[ferredoxin] + 3 H2O. It catalyses the reaction spirilloxanthin + 4 reduced [2Fe-2S]-[ferredoxin] + 2 O2 + 4 H(+) = 2-oxospirilloxanthin + 4 oxidized [2Fe-2S]-[ferredoxin] + 3 H2O. The catalysed reaction is 2-oxospirilloxanthin + 4 reduced [2Fe-2S]-[ferredoxin] + 2 O2 + 4 H(+) = 2,2'-dioxospirilloxanthin + 4 oxidized [2Fe-2S]-[ferredoxin] + 3 H2O. The enzyme catalyses spheroidene + 2 reduced [2Fe-2S]-[ferredoxin] + O2 + 2 H(+) = 2-hydroxyspheroidene + 2 oxidized [2Fe-2S]-[ferredoxin] + H2O. It carries out the reaction 2-hydroxyspheroidene + 2 reduced [2Fe-2S]-[ferredoxin] + O2 + 2 H(+) = 2,2-dihydroxyspheroidene + 2 oxidized [2Fe-2S]-[ferredoxin] + H2O. It catalyses the reaction 2,2-dihydroxyspheroidene = spheroiden-2-one + H2O. The catalysed reaction is spirilloxanthin + 2 reduced [2Fe-2S]-[ferredoxin] + O2 + 2 H(+) = 2-hydroxyspirilloxanthin + 2 oxidized [2Fe-2S]-[ferredoxin] + H2O. The enzyme catalyses 2-hydroxyspirilloxanthin + 2 reduced [2Fe-2S]-[ferredoxin] + O2 + 2 H(+) = 2,2-dihydroxyspirilloxanthin + 2 oxidized [2Fe-2S]-[ferredoxin] + H2O. It carries out the reaction 2,2-dihydroxyspirilloxanthin = 2-oxospirilloxanthin + H2O. It catalyses the reaction 2-oxospirilloxanthin + 2 reduced [2Fe-2S]-[ferredoxin] + O2 + 2 H(+) = 2'-hydroxy-2-oxospirilloxanthin + 2 oxidized [2Fe-2S]-[ferredoxin] + H2O. The catalysed reaction is 2'-hydroxy-2-oxospirilloxanthin + 2 reduced [2Fe-2S]-[ferredoxin] + O2 + 2 H(+) = 2',2'-dihydroxy-2-oxospirilloxanthin + 2 oxidized [2Fe-2S]-[ferredoxin] + H2O. The enzyme catalyses 2',2'-dihydroxy-2-oxospirilloxanthin = 2,2'-dioxospirilloxanthin + H2O. It functions in the pathway carotenoid biosynthesis; spheroidene biosynthesis. Its function is as follows. Involved in the biosynthesis of the carotenoid spheroidene. Catalyzes the introduction of one keto group at the C-2 position of spheroidene. In vitro, can also catalyze the introduction of two keto groups at the C-2 and C-2' positions of spirilloxanthin, but spirilloxanthin biosynthesis pathway is not present in R.capsulatus. The sequence is that of Spheroidene monooxygenase from Rhodobacter capsulatus (strain ATCC BAA-309 / NBRC 16581 / SB1003).